Consider the following 215-residue polypeptide: UPF0502 protein Shal_1801 (215 aa).

The protein belongs to the UPF0502 family.

The sequence is that of UPF0502 protein Shal_1801 from Shewanella halifaxensis (strain HAW-EB4).